The following is a 317-amino-acid chain: Cell division protein FtsX (317 aa).

Residues 1–39 (MAIVRHKQPPLRRFMMYWVDHARQAFSSLGELWRNPLAS) lie on the Cytoplasmic side of the membrane. Residues 40 to 60 (LMTLAVLGVSLALPSCFHVLL) traverse the membrane as a helical segment. Residues 61-188 (KNAEVVEGSW…LQGIMNLLRH (128 aa)) lie on the Periplasmic side of the membrane. The helical transmembrane segment at 189 to 209 (TITGIAVLLLSAVLLIVGNTL) threads the bilayer. The Cytoplasmic portion of the chain corresponds to 210-241 (RLNILNQRSEIEVLKLVGATDAFIHRPFLYTG). Residues 242 to 262 (IWFGVIGGMLAWWLTEVMVIW) form a helical membrane-spanning segment. Residues 263-280 (SEGVVNELAGLYNSNFRL) lie on the Periplasmic side of the membrane. A helical transmembrane segment spans residues 281–301 (VGMGAVDGINLILLGALLGLI). At 302 to 317 (ASWFSVHRHIRDIEPS) the chain is on the cytoplasmic side.

The protein belongs to the ABC-4 integral membrane protein family. FtsX subfamily. As to quaternary structure, forms a membrane-associated complex with FtsE.

Its subcellular location is the cell inner membrane. In terms of biological role, part of the ABC transporter FtsEX involved in cellular division. Encoded in an operon consisting of genes ftsY, ftsE and ftsX. The protein is Cell division protein FtsX of Aeromonas hydrophila.